The chain runs to 167 residues: MSDLICVGSVAGSFGVRGEVRLKSFCAVPEDIEMYSPLTDESGTARYPIVLTRAIKNGFAAHLGGVETKEEADALKGLRLYTQRDRLPSLPDDEFYHTDLIGLEVFDTGGTLLGKVISVQNHGAADLLEIGGAGLKSPVLLPFTQAAVPTVDLEQRRIVADPPEGLF.

A PRC barrel domain is found at Asp-92 to Leu-166.

The protein belongs to the RimM family. As to quaternary structure, binds ribosomal protein uS19.

Its subcellular location is the cytoplasm. In terms of biological role, an accessory protein needed during the final step in the assembly of 30S ribosomal subunit, possibly for assembly of the head region. Essential for efficient processing of 16S rRNA. May be needed both before and after RbfA during the maturation of 16S rRNA. It has affinity for free ribosomal 30S subunits but not for 70S ribosomes. In Ruegeria pomeroyi (strain ATCC 700808 / DSM 15171 / DSS-3) (Silicibacter pomeroyi), this protein is Ribosome maturation factor RimM.